Consider the following 728-residue polypeptide: Homoaconitase, mitochondrial (728 aa).

A mitochondrion-targeting transit peptide spans 1-24; the sequence is MVAIPRLARLSVPAWALSARGRFY. Residues cysteine 362, cysteine 422, and cysteine 425 each coordinate [4Fe-4S] cluster.

This sequence belongs to the aconitase/IPM isomerase family. [4Fe-4S] cluster is required as a cofactor.

Its subcellular location is the mitochondrion. It catalyses the reaction (2R,3S)-homoisocitrate = cis-homoaconitate + H2O. The protein operates within amino-acid biosynthesis; L-lysine biosynthesis via AAA pathway; L-alpha-aminoadipate from 2-oxoglutarate: step 3/5. In terms of biological role, catalyzes the reversible hydration of cis-homoaconitate to (2R,3S)-homoisocitrate, a step in the alpha-aminoadipate pathway for lysine biosynthesis. The polypeptide is Homoaconitase, mitochondrial (LYS4) (Cryptococcus neoformans var. neoformans serotype D (strain JEC21 / ATCC MYA-565) (Filobasidiella neoformans)).